Consider the following 179-residue polypeptide: UPF0227 protein Shewmr4_1727 (179 aa).

Belongs to the UPF0227 family.

The polypeptide is UPF0227 protein Shewmr4_1727 (Shewanella sp. (strain MR-4)).